A 410-amino-acid polypeptide reads, in one-letter code: WD repeat and FYVE domain-containing protein 1 (410 aa).

WD repeat units follow at residues 22-61, 66-105, 112-150, 153-192, 197-236, and 240-279; these read GHQD…QYWP, TMAS…NKMN, AHQN…NMLG, FFSS…CSVI, GHEG…GRTL, and GHHD…EEAP. The FYVE-type zinc-finger motif lies at 281 to 352; it reads WLESDSCQKC…VCDSCYDSIK (72 aa). Residues C287, C290, C314, C317, C322, C325, C344, and C347 each coordinate Zn(2+). The stretch at 364–403 is one WD 7 repeat; the sequence is EGKHNISHMSMDVARGLMVTCGTDRVVKIWDMTPVVGCSL. S408 carries the post-translational modification Phosphoserine.

Binds PtdIns3P in vitro with high specificity over other phosphoinositides. Interacts (via WD repeat 2) with tyrosine-phosphorylated TLR3 (via TIR domain) in response to poly(I:C). Interacts with TLR4 in response to LPS. Interacts with TICAM1 in response to poly(I:C).

The protein localises to the early endosome. Positively regulates TLR3- and TLR4-mediated signaling pathways by bridging the interaction between TLR3 or TLR4 and TICAM1. Promotes TLR3/4 ligand-induced activation of transcription factors IRF3 and NF-kappa-B, as well as the production of IFN-beta and inflammatory cytokines. The polypeptide is WD repeat and FYVE domain-containing protein 1 (WDFY1) (Bos taurus (Bovine)).